The following is a 304-amino-acid chain: Histone H1.8 (304 aa).

A compositionally biased stretch (low complexity) spans 1–24; the sequence is MAPGSVSSVSSSSFPSRDTSPSGS. Disordered regions lie at residues 1–38, 110–248, and 270–304; these read MAPG…PSCR, SKAK…NSVA, and TVQE…NTQA. Residues 45–123 enclose the H15 domain; it reads RNPTMLHMVL…GATGSFKLVP (79 aa). Over residues 132–144 the composition is skewed to low complexity; sequence APKAGRGAAGAKE. Basic and acidic residues-rich tracts occupy residues 153–166, 189–202, and 225–237; these read LKKD…MEKG, KPKE…KQDK, and ANAH…EKSK. Residues 154-170 carry the Nuclear localization signal motif; it reads KKDQVGKATMEKGQKRR. Residues 270–281 are compositionally biased toward polar residues; the sequence is TVQETKVPTPSQ.

Belongs to the histone H1/H5 family. In terms of tissue distribution, oocyte-specific.

Its subcellular location is the cytoplasm. The protein localises to the nucleus. It is found in the chromosome. Functionally, may play a key role in the control of gene expression during oogenesis and early embryogenesis, presumably through the perturbation of chromatin structure. Essential for meiotic maturation of germinal vesicle-stage oocytes. The somatic type linker histone H1c is rapidly replaced by H1oo in a donor nucleus transplanted into an oocyte. The greater mobility of H1oo as compared to H1c may contribute to this rapid replacement and increased instability of the embryonic chromatin structure. The rapid replacement of H1c with H1oo may play an important role in nuclear remodeling. In Mus musculus (Mouse), this protein is Histone H1.8.